Reading from the N-terminus, the 205-residue chain is Mediator of RNA polymerase II transcription subunit 29 (205 aa).

Positions 1 to 27 (MNPNMNMMQMSGPPMMQVSPMMQSSPQ) are enriched in low complexity. The segment at 1–65 (MNPNMNMMQM…QQQQQQAEKL (65 aa)) is disordered. The segment covering 28-38 (PMMPTGPPGPV) has biased composition (pro residues). The segment covering 39–61 (PMQQQHQQQQQQQQQQQQQQQQQ) has biased composition (low complexity).

It belongs to the Mediator complex subunit 29 family. Component of the Mediator complex.

The protein localises to the nucleus. Functionally, component of the Mediator complex, a coactivator involved in the regulated transcription of nearly all RNA polymerase II-dependent genes. Mediator functions as a bridge to convey information from gene-specific regulatory proteins to the basal RNA polymerase II transcription machinery. Mediator is recruited to promoters by direct interactions with regulatory proteins and serves as a scaffold for the assembly of a functional preinitiation complex with RNA polymerase II and the general transcription factors. This is Mediator of RNA polymerase II transcription subunit 29 (ix) from Drosophila virilis (Fruit fly).